Here is a 425-residue protein sequence, read N- to C-terminus: Adenylosuccinate synthetase (425 aa).

GTP contacts are provided by residues 12-18 (GDEGKGK) and 40-42 (GHT). Asp13 (proton acceptor) is an active-site residue. Positions 13 and 40 each coordinate Mg(2+). IMP-binding positions include 13–16 (DEGK), 38–41 (NAGH), Thr130, Arg144, Gln224, Thr239, and Arg301. His41 functions as the Proton donor in the catalytic mechanism. Substrate is bound at residue 297-303 (TVSNRRR). GTP contacts are provided by residues Arg303, 329 to 331 (KLD), and 411 to 413 (STS).

This sequence belongs to the adenylosuccinate synthetase family. Homodimer. Mg(2+) is required as a cofactor.

The protein localises to the cytoplasm. The enzyme catalyses IMP + L-aspartate + GTP = N(6)-(1,2-dicarboxyethyl)-AMP + GDP + phosphate + 2 H(+). Its pathway is purine metabolism; AMP biosynthesis via de novo pathway; AMP from IMP: step 1/2. In terms of biological role, plays an important role in the de novo pathway of purine nucleotide biosynthesis. Catalyzes the first committed step in the biosynthesis of AMP from IMP. This is Adenylosuccinate synthetase from Wolbachia pipientis subsp. Culex pipiens (strain wPip).